A 150-amino-acid polypeptide reads, in one-letter code: Large ribosomal subunit protein bL9 (150 aa).

This sequence belongs to the bacterial ribosomal protein bL9 family.

Binds to the 23S rRNA. This chain is Large ribosomal subunit protein bL9, found in Vibrio parahaemolyticus serotype O3:K6 (strain RIMD 2210633).